We begin with the raw amino-acid sequence, 346 residues long: Ribonucleoside-diphosphate reductase subunit beta (346 aa).

Glu89, Glu120, and His123 together coordinate Fe cation. The active site involves Tyr129. Fe cation is bound by residues Glu193, Glu227, and His230.

The protein belongs to the ribonucleoside diphosphate reductase small chain family. As to quaternary structure, tetramer of two alpha and two beta subunits. Fe cation serves as cofactor.

It catalyses the reaction a 2'-deoxyribonucleoside 5'-diphosphate + [thioredoxin]-disulfide + H2O = a ribonucleoside 5'-diphosphate + [thioredoxin]-dithiol. In terms of biological role, provides the precursors necessary for DNA synthesis. Catalyzes the biosynthesis of deoxyribonucleotides from the corresponding ribonucleotides. This Chlamydia trachomatis serovar D (strain ATCC VR-885 / DSM 19411 / UW-3/Cx) protein is Ribonucleoside-diphosphate reductase subunit beta (nrdB).